The following is a 129-amino-acid chain: D-ribose pyranase (129 aa).

The active-site Proton donor is the H20. Substrate is bound by residues D28, H96, and 118–120 (YAN).

It belongs to the RbsD / FucU family. RbsD subfamily. As to quaternary structure, homodecamer.

It localises to the cytoplasm. The catalysed reaction is beta-D-ribopyranose = beta-D-ribofuranose. It functions in the pathway carbohydrate metabolism; D-ribose degradation; D-ribose 5-phosphate from beta-D-ribopyranose: step 1/2. Its function is as follows. Catalyzes the interconversion of beta-pyran and beta-furan forms of D-ribose. The polypeptide is D-ribose pyranase (Exiguobacterium sp. (strain ATCC BAA-1283 / AT1b)).